Here is a 580-residue protein sequence, read N- to C-terminus: XK-related protein 7 (580 aa).

Low complexity predominate over residues 1-22; it reads MAAKSDGAAAVAGPGPEGPAGA. Positions 1 to 28 are disordered; it reads MAAKSDGAAAVAGPGPEGPAGADRGGAG. A run of 8 helical transmembrane segments spans residues 59-79, 89-109, 260-280, 303-323, 326-346, 355-375, 384-404, and 415-435; these read WVLC…WLAA, YFGL…LLSF, LLTA…LASY, VLWH…FASV, LYFG…VIQG, WEEI…WFNV, VTLY…FWYS, and LILV…MCVY. The interval 470–516 is disordered; sequence TSPPRSLPRTTGAERDGAAVGGERAGTPTPPVFQVRPGLPPTPVARP.

It belongs to the XK family.

Its subcellular location is the cell membrane. The polypeptide is XK-related protein 7 (Rattus norvegicus (Rat)).